The chain runs to 75 residues: uncharacterized protein (75 aa).

A run of 2 helical transmembrane segments spans residues 5-25 (VIIC…IFEI) and 42-62 (VAIF…GSVL).

Its subcellular location is the membrane. This is an uncharacterized protein from Saccharomyces cerevisiae (strain ATCC 204508 / S288c) (Baker's yeast).